A 122-amino-acid polypeptide reads, in one-letter code: uncharacterized protein (122 aa).

Residues 1–10 are compositionally biased toward polar residues; the sequence is MGTGLRSQSL. Residues 1-68 form a disordered region; it reads MGTGLRSQSL…GQEWLPGSLG (68 aa). Basic and acidic residues predominate over residues 40–56; sequence QGREKSRSSDGGPERLD.

This is an uncharacterized protein from Bos taurus (Bovine).